Reading from the N-terminus, the 242-residue chain is Large ribosomal subunit protein uL1 (242 aa).

The protein belongs to the universal ribosomal protein uL1 family. Part of the 50S ribosomal subunit.

Binds directly to 23S rRNA. The L1 stalk is quite mobile in the ribosome, and is involved in E site tRNA release. Functionally, protein L1 is also a translational repressor protein, it controls the translation of the L11 operon by binding to its mRNA. In Streptomyces sp. (strain FRI-5), this protein is Large ribosomal subunit protein uL1.